The following is a 757-amino-acid chain: Polyribonucleotide nucleotidyltransferase (757 aa).

2 residues coordinate Mg(2+): Asp-489 and Asp-495. The region spanning 556–615 (PKILCYKIDKDVVHKVIGSGGKTIRGISSDTSAKIDIDQNNYVYIMADTEEALMEAKTRV) is the KH domain. One can recognise an S1 motif domain in the interval 632 to 700 (GELYDGKIVS…SDGKIKLTMR (69 aa)). Residues 702-757 (DEDRVGSGGSSSSPKKRFGAHPRKNGKDNRSNNSERGFNERSGSAEGSSISRKRFF) form a disordered region. Basic residues predominate over residues 715 to 725 (PKKRFGAHPRK). Polar residues predominate over residues 732–751 (SNNSERGFNERSGSAEGSSI).

It belongs to the polyribonucleotide nucleotidyltransferase family. The cofactor is Mg(2+).

The protein localises to the cytoplasm. The catalysed reaction is RNA(n+1) + phosphate = RNA(n) + a ribonucleoside 5'-diphosphate. Functionally, involved in mRNA degradation. Catalyzes the phosphorolysis of single-stranded polyribonucleotides processively in the 3'- to 5'-direction. This Neorickettsia sennetsu (strain ATCC VR-367 / Miyayama) (Ehrlichia sennetsu) protein is Polyribonucleotide nucleotidyltransferase.